A 205-amino-acid polypeptide reads, in one-letter code: MATDLKLVVGLGNPGAKYAGTRHNIGFMALELLGERSGFSFRQQAKLHGLAADTGVGEQRLRLLMPQTYMNDSGRAIRAALDWFGLEPHQLLVLVDDMDLPLGRLRLRAQGSAGGHNGLRSTIQHLGTQAFPRLRIGIGAPAENPAERRVRTVSHVLGPFSKVEQPCVGAVLDAVLDGIQRLQRQSFERAGTWINGFRYDLEPVD.

Position 18 (Tyr18) interacts with tRNA. The active-site Proton acceptor is the His23. 3 residues coordinate tRNA: Tyr69, Asn71, and Asn117.

Belongs to the PTH family. In terms of assembly, monomer.

The protein resides in the cytoplasm. It catalyses the reaction an N-acyl-L-alpha-aminoacyl-tRNA + H2O = an N-acyl-L-amino acid + a tRNA + H(+). In terms of biological role, hydrolyzes ribosome-free peptidyl-tRNAs (with 1 or more amino acids incorporated), which drop off the ribosome during protein synthesis, or as a result of ribosome stalling. Its function is as follows. Catalyzes the release of premature peptidyl moieties from peptidyl-tRNA molecules trapped in stalled 50S ribosomal subunits, and thus maintains levels of free tRNAs and 50S ribosomes. The chain is Peptidyl-tRNA hydrolase from Synechococcus sp. (strain CC9605).